Consider the following 110-residue polypeptide: MVMVTQKIYIELKAFDSYLLDRSARSIILTAKRSGARVNGPIFFPRRVAKFIVNRSTHVDKKSREQFEIRTHKRLISLPKANSTIIQALMSLQLPAGVDVKVKVIGGSNG.

The protein belongs to the universal ribosomal protein uS10 family. Part of the 30S ribosomal subunit.

Involved in the binding of tRNA to the ribosomes. The polypeptide is Small ribosomal subunit protein uS10 (Ehrlichia ruminantium (strain Gardel)).